We begin with the raw amino-acid sequence, 593 residues long: Vicilin Jug r 2.0101 (593 aa).

2 stretches are compositionally biased toward basic and acidic residues: residues 46–76 (LEEDQRSQEERERRRGRDVDDQNPRDPEQRY) and 97–118 (RRCEQRRQQEERERQRGRDRQD). A disordered region spans residues 46 to 123 (LEEDQRSQEE…RDRQDPQQQY (78 aa)). IgE-binding stretches follow at residues 49-58 (DQRSQEERER), 76-85 (YEQCQQQCER), and 101-110 (QRRQQEERER). The igE-binding. Involved in cross-reactivity with peanut allergen Ara h 2; able to inhibit binding of IgE from a peanut-allergic patient to Ara h 2 stretch occupies residues 140-149 (QRQCQQRCER). The segment covering 150 to 178 (QYKEQQGRERGPEASPRRESRGREEEQQR) has biased composition (basic and acidic residues). The segment at 150–184 (QYKEQQGRERGPEASPRRESRGREEEQQRHNPYYF) is disordered. T-cell epitope; recognized by the HLA-DRB1-restricted CD4(+) T-cells regions lie at residues 175–193 (EQQRHNPYYFHSQSIRSRH) and 206–225 (FTERTELLRGIENYRVVILD). Position 182 (Tyr182) interacts with Cu cation. Cupin type-1 domains lie at 187–341 (QSIR…DRLE) and 386–556 (ISLK…EEIE). Residue Asn229 is glycosylated (N-linked (GlcNAc...) asparagine). T-cell epitope; recognized by the HLA-DRB1-restricted CD4(+) T-cells regions lie at residues 246–265 (TRGRATLTLVSQETRESFNL), 302–321 (PGQFREYYAAGAKSPDQSYL), 318–337 (QSYLRVFSNDILVAALNTPR), 382–401 (SGGPISLKSESPSYSNQFGQ), 414–433 (QEMDVLVNYAEIKRGAMMVP), and 438–457 (KATVVVYVVEGTGRYEMACP). Residues Cys456 and His458 each coordinate Cu cation. The interval 463 to 470 (SYEGQGRR) is igE-binding. Positions 478–497 (TGRFQKVTARLARGDIFVIP) are T-cell epitope; recognized by the HLA-DRB1-restricted CD4(+) T-cells. A Cu cation-binding site is contributed by His500. A coiled-coil region spans residues 529 to 556 (LAGQNNIINQLEREAKELSFNMPREEIE). Positions 541 to 555 (REAKELSFNMPREEI) are igE-binding. T-cell epitope; recognized by the HLA-DRB1-restricted CD4(+) T-cells stretches follow at residues 542–561 (EAKELSFNMPREEIEEIFES) and 558–577 (IFESQMESYFVPTERQSRRG).

This sequence belongs to the 7S seed storage protein family. In terms of processing, proteolytically cleaved. As to expression, expressed in seed (at protein level).

Functionally, seed storage protein. This chain is Vicilin Jug r 2.0101, found in Juglans regia (English walnut).